Consider the following 157-residue polypeptide: MKLSHLDEKNHPKMVDVSDKNITLRIATASGIIYMSQEAFDVIKNNTAKKGPVLQTAIVAAIMGVKKTSEIIPMCHPLMLSKVETNIVEFVKECAFKLIVTVKCEGKTGVEMEALSGVSIGLLTIYDMIKAIDKSMRITDIVLESKEGGKSGKFVRS.

Residues 74–76 (MCH) and 112–113 (ME) each bind substrate. Residue D127 is part of the active site.

It belongs to the MoaC family. Homohexamer; trimer of dimers.

The enzyme catalyses (8S)-3',8-cyclo-7,8-dihydroguanosine 5'-triphosphate = cyclic pyranopterin phosphate + diphosphate. Its pathway is cofactor biosynthesis; molybdopterin biosynthesis. Its function is as follows. Catalyzes the conversion of (8S)-3',8-cyclo-7,8-dihydroguanosine 5'-triphosphate to cyclic pyranopterin monophosphate (cPMP). This is Cyclic pyranopterin monophosphate synthase from Campylobacter jejuni subsp. jejuni serotype O:2 (strain ATCC 700819 / NCTC 11168).